Consider the following 233-residue polypeptide: Biosynthetic peptidoglycan transglycosylase (233 aa).

Residues 8 to 28 (LIALPVGIFIFFNAYVYGNII) form a helical membrane-spanning segment.

This sequence belongs to the glycosyltransferase 51 family.

The protein localises to the cell inner membrane. The catalysed reaction is [GlcNAc-(1-&gt;4)-Mur2Ac(oyl-L-Ala-gamma-D-Glu-L-Lys-D-Ala-D-Ala)](n)-di-trans,octa-cis-undecaprenyl diphosphate + beta-D-GlcNAc-(1-&gt;4)-Mur2Ac(oyl-L-Ala-gamma-D-Glu-L-Lys-D-Ala-D-Ala)-di-trans,octa-cis-undecaprenyl diphosphate = [GlcNAc-(1-&gt;4)-Mur2Ac(oyl-L-Ala-gamma-D-Glu-L-Lys-D-Ala-D-Ala)](n+1)-di-trans,octa-cis-undecaprenyl diphosphate + di-trans,octa-cis-undecaprenyl diphosphate + H(+). The protein operates within cell wall biogenesis; peptidoglycan biosynthesis. Functionally, peptidoglycan polymerase that catalyzes glycan chain elongation from lipid-linked precursors. This is Biosynthetic peptidoglycan transglycosylase from Neisseria meningitidis serogroup B (strain ATCC BAA-335 / MC58).